The chain runs to 342 residues: Dual-specificity RNA methyltransferase RlmN (342 aa).

Catalysis depends on Glu92, which acts as the Proton acceptor. Residues 98 to 329 enclose the Radical SAM core domain; the sequence is DLPRSTLCVS…THVRRSRGGE (232 aa). A disulfide bond links Cys105 and Cys334. Residues Cys112, Cys116, and Cys119 each contribute to the [4Fe-4S] cluster site. S-adenosyl-L-methionine is bound by residues 161-162, Ser193, 215-217, and Asn291; these read GE and SLH. Cys334 (S-methylcysteine intermediate) is an active-site residue.

This sequence belongs to the radical SAM superfamily. RlmN family. It depends on [4Fe-4S] cluster as a cofactor.

It localises to the cytoplasm. The enzyme catalyses adenosine(2503) in 23S rRNA + 2 reduced [2Fe-2S]-[ferredoxin] + 2 S-adenosyl-L-methionine = 2-methyladenosine(2503) in 23S rRNA + 5'-deoxyadenosine + L-methionine + 2 oxidized [2Fe-2S]-[ferredoxin] + S-adenosyl-L-homocysteine. The catalysed reaction is adenosine(37) in tRNA + 2 reduced [2Fe-2S]-[ferredoxin] + 2 S-adenosyl-L-methionine = 2-methyladenosine(37) in tRNA + 5'-deoxyadenosine + L-methionine + 2 oxidized [2Fe-2S]-[ferredoxin] + S-adenosyl-L-homocysteine. In terms of biological role, specifically methylates position 2 of adenine 2503 in 23S rRNA and position 2 of adenine 37 in tRNAs. m2A2503 modification seems to play a crucial role in the proofreading step occurring at the peptidyl transferase center and thus would serve to optimize ribosomal fidelity. This Syntrophobacter fumaroxidans (strain DSM 10017 / MPOB) protein is Dual-specificity RNA methyltransferase RlmN.